Here is a 402-residue protein sequence, read N- to C-terminus: Argininosuccinate synthase (402 aa).

Position 8–16 (8–16 (AYSGGLDTS)) interacts with ATP. L-citrulline is bound by residues Tyr86 and Ser91. Gly116 provides a ligand contact to ATP. Residues Thr118, Asn122, and Asp123 each contribute to the L-aspartate site. Asn122 is an L-citrulline binding site. Positions 126, 175, 184, 260, and 272 each coordinate L-citrulline.

The protein belongs to the argininosuccinate synthase family. Type 1 subfamily. As to quaternary structure, homotetramer.

Its subcellular location is the cytoplasm. The catalysed reaction is L-citrulline + L-aspartate + ATP = 2-(N(omega)-L-arginino)succinate + AMP + diphosphate + H(+). It functions in the pathway amino-acid biosynthesis; L-arginine biosynthesis; L-arginine from L-ornithine and carbamoyl phosphate: step 2/3. The polypeptide is Argininosuccinate synthase (Clostridium novyi (strain NT)).